The primary structure comprises 265 residues: Glutamate racemase (265 aa).

Substrate is bound by residues 9–10 (DS) and 41–42 (YG). The active-site Proton donor/acceptor is the Cys72. A substrate-binding site is contributed by 73–74 (NT). Cys183 (proton donor/acceptor) is an active-site residue. Residue 184-185 (TH) coordinates substrate.

This sequence belongs to the aspartate/glutamate racemases family.

It carries out the reaction L-glutamate = D-glutamate. Its pathway is cell wall biogenesis; peptidoglycan biosynthesis. Provides the (R)-glutamate required for cell wall biosynthesis. This chain is Glutamate racemase, found in Lysinibacillus sphaericus (Bacillus sphaericus).